The sequence spans 203 residues: tRNA (pseudouridine(54)-N(1))-methyltransferase (203 aa).

S-adenosyl-L-methionine contacts are provided by Leu135 and Gly156.

This sequence belongs to the methyltransferase superfamily. TrmY family. In terms of assembly, homodimer.

Its subcellular location is the cytoplasm. The enzyme catalyses pseudouridine(54) in tRNA + S-adenosyl-L-methionine = N(1)-methylpseudouridine(54) in tRNA + S-adenosyl-L-homocysteine + H(+). Its function is as follows. Specifically catalyzes the N1-methylation of pseudouridine at position 54 (Psi54) in tRNAs. In Thermococcus onnurineus (strain NA1), this protein is tRNA (pseudouridine(54)-N(1))-methyltransferase.